We begin with the raw amino-acid sequence, 767 residues long: Phosphoribosylformylglycinamidine synthase subunit PurL (767 aa).

Residue His-65 is part of the active site. ATP is bound by residues Tyr-68 and Lys-112. Glu-114 contacts Mg(2+). Substrate-binding positions include 115–118 (SHNH) and Arg-137. His-116 acts as the Proton acceptor in catalysis. Asp-138 contributes to the Mg(2+) binding site. Residue Gln-262 coordinates substrate. Asp-290 provides a ligand contact to Mg(2+). 334 to 336 (ESQ) is a binding site for substrate. ATP contacts are provided by Asp-522 and Gly-559. Residue Asn-560 coordinates Mg(2+). Ser-562 contributes to the substrate binding site.

It belongs to the FGAMS family. Monomer. Part of the FGAM synthase complex composed of 1 PurL, 1 PurQ and 2 PurS subunits.

It localises to the cytoplasm. It catalyses the reaction N(2)-formyl-N(1)-(5-phospho-beta-D-ribosyl)glycinamide + L-glutamine + ATP + H2O = 2-formamido-N(1)-(5-O-phospho-beta-D-ribosyl)acetamidine + L-glutamate + ADP + phosphate + H(+). Its pathway is purine metabolism; IMP biosynthesis via de novo pathway; 5-amino-1-(5-phospho-D-ribosyl)imidazole from N(2)-formyl-N(1)-(5-phospho-D-ribosyl)glycinamide: step 1/2. Functionally, part of the phosphoribosylformylglycinamidine synthase complex involved in the purines biosynthetic pathway. Catalyzes the ATP-dependent conversion of formylglycinamide ribonucleotide (FGAR) and glutamine to yield formylglycinamidine ribonucleotide (FGAM) and glutamate. The FGAM synthase complex is composed of three subunits. PurQ produces an ammonia molecule by converting glutamine to glutamate. PurL transfers the ammonia molecule to FGAR to form FGAM in an ATP-dependent manner. PurS interacts with PurQ and PurL and is thought to assist in the transfer of the ammonia molecule from PurQ to PurL. The polypeptide is Phosphoribosylformylglycinamidine synthase subunit PurL (Renibacterium salmoninarum (strain ATCC 33209 / DSM 20767 / JCM 11484 / NBRC 15589 / NCIMB 2235)).